The primary structure comprises 267 residues: Membrane-spanning 4-domains subfamily A member 10 (267 aa).

The Cytoplasmic portion of the chain corresponds to Met1–Gly61. Residues Ala62–Val82 form a helical membrane-spanning segment. Over Lys83–Lys91 the chain is Extracellular. A helical membrane pass occupies residues Ser92 to Met112. At Lys113–Lys121 the chain is on the cytoplasmic side. A helical transmembrane segment spans residues Met122–Ile142. At Ser143–Glu171 the chain is on the extracellular side. A helical transmembrane segment spans residues Leu172–Ala192. The Cytoplasmic segment spans residues Trp193 to Asn267.

Belongs to the MS4A family.

The protein resides in the membrane. Its function is as follows. May be involved in signal transduction as a component of a multimeric receptor complex. This Homo sapiens (Human) protein is Membrane-spanning 4-domains subfamily A member 10 (MS4A10).